Reading from the N-terminus, the 402-residue chain is tRNA pseudouridine synthase Pus10 (402 aa).

D215 serves as the catalytic Nucleophile. Positions 370–402 are disordered; it reads ERGGHPGARGGTRRRPRKGPARPAGGRDRPRKT. Residues 380-389 are compositionally biased toward basic residues; the sequence is GTRRRPRKGP.

This sequence belongs to the pseudouridine synthase Pus10 family.

It carries out the reaction uridine(54) in tRNA = pseudouridine(54) in tRNA. The catalysed reaction is uridine(55) in tRNA = pseudouridine(55) in tRNA. Responsible for synthesis of pseudouridine from uracil-54 and uracil-55 in the psi GC loop of transfer RNAs. In Cenarchaeum symbiosum (strain A), this protein is tRNA pseudouridine synthase Pus10.